The following is a 207-amino-acid chain: ATP synthase subunit delta (207 aa).

It belongs to the ATPase delta chain family. As to quaternary structure, F-type ATPases have 2 components, F(1) - the catalytic core - and F(0) - the membrane proton channel. F(1) has five subunits: alpha(3), beta(3), gamma(1), delta(1), epsilon(1). F(0) has three main subunits: a(1), b(2) and c(10-14). The alpha and beta chains form an alternating ring which encloses part of the gamma chain. F(1) is attached to F(0) by a central stalk formed by the gamma and epsilon chains, while a peripheral stalk is formed by the delta and b chains.

It localises to the cell inner membrane. Its function is as follows. F(1)F(0) ATP synthase produces ATP from ADP in the presence of a proton or sodium gradient. F-type ATPases consist of two structural domains, F(1) containing the extramembraneous catalytic core and F(0) containing the membrane proton channel, linked together by a central stalk and a peripheral stalk. During catalysis, ATP synthesis in the catalytic domain of F(1) is coupled via a rotary mechanism of the central stalk subunits to proton translocation. In terms of biological role, this protein is part of the stalk that links CF(0) to CF(1). It either transmits conformational changes from CF(0) to CF(1) or is implicated in proton conduction. The sequence is that of ATP synthase subunit delta from Psychrobacter cryohalolentis (strain ATCC BAA-1226 / DSM 17306 / VKM B-2378 / K5).